The primary structure comprises 259 residues: GTP cyclohydrolase FolE2 (259 aa).

Belongs to the GTP cyclohydrolase IV family.

It carries out the reaction GTP + H2O = 7,8-dihydroneopterin 3'-triphosphate + formate + H(+). It participates in cofactor biosynthesis; 7,8-dihydroneopterin triphosphate biosynthesis; 7,8-dihydroneopterin triphosphate from GTP: step 1/1. Its function is as follows. Converts GTP to 7,8-dihydroneopterin triphosphate. In Thermosipho africanus (strain TCF52B), this protein is GTP cyclohydrolase FolE2.